A 679-amino-acid polypeptide reads, in one-letter code: uncharacterized protein (679 aa).

A run of 12 helical transmembrane segments spans residues 23–41 (YALRNTIAMCLALTFAYYL), 46–65 (PYWAMTSAAVVSFPTVGGVI), 72–90 (IAGSLLGATAALIIAGHTL), 94–113 (WLFLFSMAAWIGFCTWACAH), 120–142 (YAFQLSGYTAAIIAFPMVNIVEI), 157–179 (IVGILCGGMMMMILPSTSDGTAL), 362–381 (WSGVRTFCTLTVIGAWSIGA), 385–404 (SGPGALTLAAISCVLYSIVA), 411–433 (SLLMRTLVLLSLFSFVVKFGLMV), 438–455 (LWQFLLFLFPLFVTMQLL), 462–481 (LAGLWGQLIVFMGSFIAVTN), and 496–515 (AKIVGVAISWLAFAILRPGS).

This sequence belongs to the aromatic acid exporter ArAE (TC 2.A.85) family.

It is found in the cell membrane. This is an uncharacterized protein from Salmonella typhimurium (strain LT2 / SGSC1412 / ATCC 700720).